The chain runs to 106 residues: Putative double-stranded DNA mimic protein VCM66_1163 (106 aa).

The protein belongs to the putative dsDNA mimic protein family.

In terms of biological role, may act as a double-stranded DNA (dsDNA) mimic. Probably regulates the activity of a dsDNA-binding protein. This chain is Putative double-stranded DNA mimic protein VCM66_1163, found in Vibrio cholerae serotype O1 (strain M66-2).